The following is a 637-amino-acid chain: Chaperone protein DnaK (637 aa).

T196 is modified (phosphothreonine; by autocatalysis). The segment at 598–637 is disordered; the sequence is AEAPGADAPEGQAPQDGGSKKGGEGAVENAEYEVIDGDGK. The span at 627 to 637 shows a compositional bias: acidic residues; it reads AEYEVIDGDGK.

Belongs to the heat shock protein 70 family.

Its function is as follows. Acts as a chaperone. The protein is Chaperone protein DnaK of Chlorobium luteolum (strain DSM 273 / BCRC 81028 / 2530) (Pelodictyon luteolum).